We begin with the raw amino-acid sequence, 185 residues long: Bacteriocin UviA (185 aa).

In terms of biological role, may have a role in bacteriocin secretion or immunity. This is Bacteriocin UviA (uviA) from Clostridium perfringens.